Consider the following 456-residue polypeptide: Toxin CfTX-1 (456 aa).

An N-terminal signal peptide occupies residues 1–20; the sequence is MVKMLFFAFLPLLFMTGIAA.

The protein belongs to the jellyfish toxin family. Type I subfamily. Oligomer. Post-translationally, contains disulfide bonds. Nematocytes.

The protein localises to the secreted. Its subcellular location is the nematocyst. It is found in the target cell membrane. Functionally, may cause profound effects on the cardiovascular system of anesthetized rats (at 25 ug/kg), since the fraction containing this toxin and CfTX-2 produces an initial increase in mean arterial pressure, followed by cardiovascular collapse in all animals within 1 minute of injection. To note, the same fraction does not induce significant change in heart rate. Has weak hemolytic activity. Is lethal to crayfish. Causes cutaneous inflammation in humans. May act as a pore-forming toxin, disrupting normal transmembrane ion concentration gradients in susceptible cells. This chain is Toxin CfTX-1, found in Chironex fleckeri (Australian box jellyfish).